The primary structure comprises 150 residues: MRMPEHLQRLIEPVVTGLGYELAGIEFDARARVLRVYIDHPQGIGLDDCSKVSYQLSGMLDVEDPIPGQYQLEISSPGLDRPLFTLEHFKRFTGRRVRLQTLRSLDGQRRFKGEIAGVRGDVIDLEDDNGLHAIPFDLIDKARLIPEFDI.

It belongs to the RimP family.

It localises to the cytoplasm. Required for maturation of 30S ribosomal subunits. This chain is Ribosome maturation factor RimP, found in Methylococcus capsulatus (strain ATCC 33009 / NCIMB 11132 / Bath).